The chain runs to 452 residues: Serine incorporator 2 (452 aa).

11 consecutive transmembrane segments (helical) span residues 5–25 (LGAC…PCIL), 41–61 (FFTV…SPGV), 96–116 (AVYR…LLMV), 131–151 (GFWF…FYIP), 158–178 (IWFY…LLLL), 205–225 (LFFF…LLFV), 236–256 (GKVF…VAIL), 266–286 (SGLL…WLAL), 319–339 (WDAP…FISL), 387–407 (FFHL…TNWY), and 426–446 (ICAS…PLLL).

Belongs to the TDE1 family.

Its subcellular location is the cell membrane. The catalysed reaction is a 1,2-diacyl-sn-glycero-3-phospho-L-serine(in) = a 1,2-diacyl-sn-glycero-3-phospho-L-serine(out). It carries out the reaction a 1,2-diacyl-sn-glycero-3-phosphocholine(in) = a 1,2-diacyl-sn-glycero-3-phosphocholine(out). It catalyses the reaction a 1,2-diacyl-sn-glycero-3-phosphoethanolamine(in) = a 1,2-diacyl-sn-glycero-3-phosphoethanolamine(out). Non-ATP-dependent, non-specific lipid transporter for phosphatidylserine, phosphatidylcholine, and phosphatidylethanolamine. Functions as a scramblase that flips lipids in both directions across the membrane. In contrast to SERINC3 and SERINC5, has no effect on gammaretrovirus particles infectivity. In Bos taurus (Bovine), this protein is Serine incorporator 2 (SERINC2).